Reading from the N-terminus, the 355-residue chain is 3-dehydroquinate synthase (355 aa).

Residues 71-76 (EGEASK), 105-109 (GVVGD), 129-130 (TS), K142, and K151 contribute to the NAD(+) site. Positions 184, 246, and 263 each coordinate Zn(2+).

This sequence belongs to the sugar phosphate cyclases superfamily. Dehydroquinate synthase family. It depends on Co(2+) as a cofactor. Zn(2+) is required as a cofactor. NAD(+) serves as cofactor.

It is found in the cytoplasm. The catalysed reaction is 7-phospho-2-dehydro-3-deoxy-D-arabino-heptonate = 3-dehydroquinate + phosphate. It functions in the pathway metabolic intermediate biosynthesis; chorismate biosynthesis; chorismate from D-erythrose 4-phosphate and phosphoenolpyruvate: step 2/7. Functionally, catalyzes the conversion of 3-deoxy-D-arabino-heptulosonate 7-phosphate (DAHP) to dehydroquinate (DHQ). The protein is 3-dehydroquinate synthase of Streptococcus thermophilus (strain CNRZ 1066).